The sequence spans 479 residues: UDP-glucose flavonoid 3-O-glucosyltransferase 6 (479 aa).

The active-site Proton acceptor is the histidine 17. Histidine 17 is an an anthocyanidin binding site. Residue aspartate 121 is the Charge relay of the active site. Positions 143, 354, 356, 371, 374, 375, 376, and 379 each coordinate UDP-alpha-D-glucose. An anthocyanidin is bound at residue alanine 394. Residues glutamate 395 and glutamine 396 each coordinate UDP-alpha-D-glucose. The tract at residues 454–479 (MSRKALEEDGSSYSSLGRFLDQIQTS) is disordered.

It belongs to the UDP-glycosyltransferase family. As to expression, strongly expressed in achenes, with lower expression levels detected in receptacles.

The catalysed reaction is a flavonol + UDP-alpha-D-glucose = a flavonol 3-O-beta-D-glucoside + UDP + H(+). Its function is as follows. Broad spectrum multifunctional glucosyltransferase. Catalyzes the formation of flavonol 3-O-glucosides during fruit ripening. Accepted substrates include several flavonoids, hydroxycoumarins and beta-naphthols. Uses UDP-Glc as a sugar donor, but not UDP-Gal or UDP-GlcUA. May also be involved in detoxification of xenobiotics. The chain is UDP-glucose flavonoid 3-O-glucosyltransferase 6 from Fragaria ananassa (Strawberry).